The following is a 325-amino-acid chain: UDP-N-acetylenolpyruvoylglucosamine reductase (325 aa).

Residues 40–221 (RTGGLAELFY…RAAMDEVALH (182 aa)) enclose the FAD-binding PCMH-type domain. Arginine 186 is a catalytic residue. The active-site Proton donor is the serine 235. Residue glutamate 305 is part of the active site.

The protein belongs to the MurB family. It depends on FAD as a cofactor.

The protein localises to the cytoplasm. It catalyses the reaction UDP-N-acetyl-alpha-D-muramate + NADP(+) = UDP-N-acetyl-3-O-(1-carboxyvinyl)-alpha-D-glucosamine + NADPH + H(+). It functions in the pathway cell wall biogenesis; peptidoglycan biosynthesis. Functionally, cell wall formation. This is UDP-N-acetylenolpyruvoylglucosamine reductase from Bartonella henselae (strain ATCC 49882 / DSM 28221 / CCUG 30454 / Houston 1) (Rochalimaea henselae).